A 94-amino-acid chain; its full sequence is MITRNDVEYVANLARLTLTEEEIEKMTKELGAIIEFANKLSELNTEGIEPTAHVLNIYNVFRSDEVKPSYPREEILKNAPSHDDVCIKVPKIVE.

It belongs to the GatC family. In terms of assembly, heterotrimer of A, B and C subunits.

It carries out the reaction L-glutamyl-tRNA(Gln) + L-glutamine + ATP + H2O = L-glutaminyl-tRNA(Gln) + L-glutamate + ADP + phosphate + H(+). The enzyme catalyses L-aspartyl-tRNA(Asn) + L-glutamine + ATP + H2O = L-asparaginyl-tRNA(Asn) + L-glutamate + ADP + phosphate + 2 H(+). Its function is as follows. Allows the formation of correctly charged Asn-tRNA(Asn) or Gln-tRNA(Gln) through the transamidation of misacylated Asp-tRNA(Asn) or Glu-tRNA(Gln) in organisms which lack either or both of asparaginyl-tRNA or glutaminyl-tRNA synthetases. The reaction takes place in the presence of glutamine and ATP through an activated phospho-Asp-tRNA(Asn) or phospho-Glu-tRNA(Gln). The chain is Aspartyl/glutamyl-tRNA(Asn/Gln) amidotransferase subunit C from Caldicellulosiruptor bescii (strain ATCC BAA-1888 / DSM 6725 / KCTC 15123 / Z-1320) (Anaerocellum thermophilum).